Consider the following 245-residue polypeptide: Phycocyanobilin:ferredoxin oxidoreductase (245 aa).

It belongs to the HY2 family.

The enzyme catalyses (2R,3Z)-phycocyanobilin + 4 oxidized [2Fe-2S]-[ferredoxin] = biliverdin IXalpha + 4 reduced [2Fe-2S]-[ferredoxin] + 4 H(+). In terms of biological role, catalyzes the four-electron reduction of biliverdin IX-alpha (2-electron reduction at both the A and D rings); the reaction proceeds via an isolatable 2-electron intermediate, 181,182-dihydrobiliverdin. Upon overexpression in E.coli with PCB:ferredoxin oxidoreductase, CpeS and either CpcB or PecB permits synthesis of phycocyanin-coupled CpcB or PecB. The polypeptide is Phycocyanobilin:ferredoxin oxidoreductase (pcyA) (Nostoc sp. (strain PCC 7120 / SAG 25.82 / UTEX 2576)).